Consider the following 125-residue polypeptide: Small ribosomal subunit protein uS12 (125 aa).

D89 carries the 3-methylthioaspartic acid modification. The segment at 106–125 (GVKDRKQSRSKYGAKRPKKA) is disordered. Over residues 113–125 (SRSKYGAKRPKKA) the composition is skewed to basic residues.

It belongs to the universal ribosomal protein uS12 family. In terms of assembly, part of the 30S ribosomal subunit. Contacts proteins S8 and S17. May interact with IF1 in the 30S initiation complex.

With S4 and S5 plays an important role in translational accuracy. In terms of biological role, interacts with and stabilizes bases of the 16S rRNA that are involved in tRNA selection in the A site and with the mRNA backbone. Located at the interface of the 30S and 50S subunits, it traverses the body of the 30S subunit contacting proteins on the other side and probably holding the rRNA structure together. The combined cluster of proteins S8, S12 and S17 appears to hold together the shoulder and platform of the 30S subunit. This Azoarcus sp. (strain BH72) protein is Small ribosomal subunit protein uS12.